The primary structure comprises 421 residues: Forkhead box protein fkh-4 (421 aa).

The fork-head DNA-binding region spans 118-218 (RPPISYVALC…SDADFDFFRK (101 aa)).

It is found in the nucleus. Functionally, transcription factor. Regulates expression of a class of small RNAs, known as 21U-RNAs, perhaps acting redundantly with fkh-3 and fkh-5. This chain is Forkhead box protein fkh-4, found in Caenorhabditis elegans.